Reading from the N-terminus, the 110-residue chain is MEMLLFLNESYIFHRLRMWSTVLWHSCVFVCVECENANYRVPRCLIKPFSVPVTFPFSVKKNIRILDLDPRTEAYCLSPYSVCSKRLPCKKYFYLLNSYNIKRVLGVVYC.

The protein belongs to the UPF0377 family.

This chain is Putative UPF0377 protein YKL223W, found in Saccharomyces cerevisiae (strain ATCC 204508 / S288c) (Baker's yeast).